We begin with the raw amino-acid sequence, 763 residues long: Actin filament-associated protein 1-like 1 (763 aa).

Positions 83–137 (LQDMPEDEAESCKAASPEPAKSPSLRHTADLPPPLPNRPPPEDYYEEALPLGPGK) are disordered. Phosphoserine occurs at positions 98, 104, and 153. Positions 169 to 210 (TRMNGELKNSYNDSDAMSSSYESYDEEEEEGKGPQPTHQWPS) are disordered. Over residues 175–185 (LKNSYNDSDAM) the composition is skewed to polar residues. The PH 1 domain occupies 220–316 (DCRICAFLLR…WLKVIREVSK (97 aa)). Ser-329 and Ser-343 each carry phosphoserine. The disordered stretch occupies residues 343 to 380 (SQEKQTSDSDSLGMGDSCSTLGREHGKGKKSSLSELKG). The region spanning 413–507 (EVPCCGYLNV…WLGLLLVEMG (95 aa)) is the PH 2 domain. Tyr-552 carries the post-translational modification Phosphotyrosine. A disordered region spans residues 561–604 (QDEEPERPPGAQVKRHASTCSEKSHRVDPQVKVKRHASSAHQYK). The span at 582-591 (EKSHRVDPQV) shows a compositional bias: basic and acidic residues. Residues 606–694 (GKNRAEEDAR…LVTVKERLQQ (89 aa)) adopt a coiled-coil conformation. Residues 712 to 724 (SGETANKPQNNVP) are compositionally biased toward polar residues. Positions 712-763 (SGETANKPQNNVPEQPLPVNCVSELRKRSPSIINSNQGRVLQKAKEWEMKKT) are disordered. At Ser-742 the chain carries Phosphoserine. The span at 754-763 (KAKEWEMKKT) shows a compositional bias: basic and acidic residues.

In terms of assembly, interacts with CTTN.

It localises to the cytoplasm. Its subcellular location is the cell projection. It is found in the podosome. The protein resides in the invadopodium. The protein localises to the cytoskeleton. It localises to the stress fiber. Functionally, may be involved in podosome and invadosome formation. The protein is Actin filament-associated protein 1-like 1 (AFAP1L1) of Bos taurus (Bovine).